Reading from the N-terminus, the 860-residue chain is Ribosome-releasing factor 2, mitochondrial (860 aa).

The region spanning 45–337 (DRTRNIGIIA…AVVNFLPSPL (293 aa)) is the tr-type G domain. GTP is bound by residues 54–61 (AHIDAGKT), 118–122 (DTPGH), and 172–175 (NKMD).

It belongs to the TRAFAC class translation factor GTPase superfamily. Classic translation factor GTPase family. EF-G/EF-2 subfamily.

The protein resides in the mitochondrion. Mitochondrial GTPase that mediates the disassembly of ribosomes from messenger RNA at the termination of mitochondrial protein biosynthesis. Not involved in the GTP-dependent ribosomal translocation step during translation elongation. The polypeptide is Ribosome-releasing factor 2, mitochondrial (Debaryomyces hansenii (strain ATCC 36239 / CBS 767 / BCRC 21394 / JCM 1990 / NBRC 0083 / IGC 2968) (Yeast)).